We begin with the raw amino-acid sequence, 224 residues long: Ribonuclease T (224 aa).

Residues Val-32–Phe-206 enclose the Exonuclease domain. Positions 35, 37, 193, and 198 each coordinate Mg(2+). His-193 acts as the Proton donor/acceptor in catalysis.

It belongs to the RNase T family. In terms of assembly, homodimer. It depends on Mg(2+) as a cofactor.

In terms of biological role, trims short 3' overhangs of a variety of RNA species, leaving a one or two nucleotide 3' overhang. Responsible for the end-turnover of tRNA: specifically removes the terminal AMP residue from uncharged tRNA (tRNA-C-C-A). Also appears to be involved in tRNA biosynthesis. The chain is Ribonuclease T from Pseudomonas aeruginosa (strain UCBPP-PA14).